We begin with the raw amino-acid sequence, 61 residues long: Small ribosomal subunit protein uS14 (61 aa).

Residues Cys-24, Cys-27, Cys-40, and Cys-43 each coordinate Zn(2+).

Belongs to the universal ribosomal protein uS14 family. Zinc-binding uS14 subfamily. Part of the 30S ribosomal subunit. Contacts proteins S3 and S10. Requires Zn(2+) as cofactor.

Functionally, binds 16S rRNA, required for the assembly of 30S particles and may also be responsible for determining the conformation of the 16S rRNA at the A site. The chain is Small ribosomal subunit protein uS14 from Anaeromyxobacter dehalogenans (strain 2CP-1 / ATCC BAA-258).